The following is a 115-amino-acid chain: MKFELLFGVLLVTLFSYSSAEMLDDFDQADEDELLSLIEKEEARAKECTPRFYDCSHDRHSCCRSELFKDVCTCFYPEGGDNEVCTCQQPKHLKYMEKAAGKAKKFGGKIKKWFG.

The first 20 residues, M1–A20, serve as a signal peptide directing secretion. A propeptide spanning residues E21–R44 is cleaved from the precursor. 4 cysteine pairs are disulfide-bonded: C48-C63, C55-C72, C62-C87, and C74-C85.

Belongs to the neurotoxin 19 (CSTX) family. 01 subfamily. As to expression, expressed by the venom gland.

Its subcellular location is the secreted. The polypeptide is U3-lycotoxin-Ls1k (Lycosa singoriensis (Wolf spider)).